The chain runs to 340 residues: Putative phosphatidylcholine:ceramide cholinephosphotransferase 3 (340 aa).

A disordered region spans residues 1-25; that stretch reads MGSVSKTVISARGASPDDEQNGTKN. The next 4 membrane-spanning stretches (helical) occupy residues 36 to 56, 81 to 101, 178 to 198, and 202 to 222; these read CIFLFFFLFIAGMSNWAVLAY, SSLGDFCVALCIVMLGALLVI, LLFSGHTLVMVTCSLAVAYYL, and IKPLQWVSHVACLIGMICMTI. H183 is a catalytic residue. The Cytoplasmic segment spans residues 223-340; the sequence is SRTHYTIDVV…SSSSTYPLPC (118 aa). Catalysis depends on residues H226 and D230. The disordered stretch occupies residues 294–313; the sequence is STPRGQERGGASAESSDSSV.

Belongs to the sphingomyelin synthase family.

The protein localises to the membrane. It catalyses the reaction an N-acyl-sphingoid base + a 1,2-diacyl-sn-glycero-3-phosphocholine = an N-(acyl)-sphingosylphosphocholine + a 1,2-diacyl-sn-glycerol. It carries out the reaction an N-acylsphing-4-enine + a 1,2-diacyl-sn-glycero-3-phosphocholine = a sphingomyelin + a 1,2-diacyl-sn-glycerol. The catalysed reaction is an N-acyl-15-methylhexadecasphing-4-enine + a 1,2-diacyl-sn-glycero-3-phosphocholine = an N-acyl-15-methylhexadecasphing-4-enine-1-phosphocholine + a 1,2-diacyl-sn-glycerol. The protein operates within lipid metabolism; sphingolipid metabolism. Bidirectional lipid cholinephosphotransferase capable of converting phosphatidylcholine (PC) and ceramide to sphingomyelin (SM) and diacylglycerol (DAG) and vice versa. Direction is dependent on the relative concentrations of DAG and ceramide as phosphocholine acceptors. Directly and specifically recognizes the choline head group on the substrate. Also requires two fatty chains on the choline-P donor molecule in order to be recognized efficiently as a substrate. Does not function strictly as a SM synthase. C.elegans contains specific sphingoid bases, which are unique or different in structure compared to the sphingoid bases found in other animals. Two examples of these distinctive compounds are: 15-methylhexadecasphinganine and 15-methylhexadecasphing-4-enine. This Caenorhabditis elegans protein is Putative phosphatidylcholine:ceramide cholinephosphotransferase 3 (sms-3).